A 453-amino-acid polypeptide reads, in one-letter code: Probable glycine dehydrogenase (decarboxylating) subunit 1 (453 aa).

The protein belongs to the GcvP family. N-terminal subunit subfamily. In terms of assembly, the glycine cleavage system is composed of four proteins: P, T, L and H. In this organism, the P 'protein' is a heterodimer of two subunits.

It catalyses the reaction N(6)-[(R)-lipoyl]-L-lysyl-[glycine-cleavage complex H protein] + glycine + H(+) = N(6)-[(R)-S(8)-aminomethyldihydrolipoyl]-L-lysyl-[glycine-cleavage complex H protein] + CO2. The glycine cleavage system catalyzes the degradation of glycine. The P protein binds the alpha-amino group of glycine through its pyridoxal phosphate cofactor; CO(2) is released and the remaining methylamine moiety is then transferred to the lipoamide cofactor of the H protein. The protein is Probable glycine dehydrogenase (decarboxylating) subunit 1 of Dictyoglomus thermophilum (strain ATCC 35947 / DSM 3960 / H-6-12).